Consider the following 141-residue polypeptide: Nucleoside diphosphate kinase (141 aa).

6 residues coordinate ATP: K9, F57, R85, T91, R102, and N112. H115 (pros-phosphohistidine intermediate) is an active-site residue.

Belongs to the NDK family. In terms of assembly, homotetramer. It depends on Mg(2+) as a cofactor.

It localises to the cytoplasm. The enzyme catalyses a 2'-deoxyribonucleoside 5'-diphosphate + ATP = a 2'-deoxyribonucleoside 5'-triphosphate + ADP. The catalysed reaction is a ribonucleoside 5'-diphosphate + ATP = a ribonucleoside 5'-triphosphate + ADP. Functionally, major role in the synthesis of nucleoside triphosphates other than ATP. The ATP gamma phosphate is transferred to the NDP beta phosphate via a ping-pong mechanism, using a phosphorylated active-site intermediate. The protein is Nucleoside diphosphate kinase of Chlamydia trachomatis serovar L2 (strain ATCC VR-902B / DSM 19102 / 434/Bu).